The primary structure comprises 278 residues: uncharacterized protein (278 aa).

Belongs to the short-chain dehydrogenases/reductases (SDR) family.

This is an uncharacterized protein from Bacillus subtilis (strain 168).